Here is a 217-residue protein sequence, read N- to C-terminus: Protein 33K (217 aa).

Positions 1-142 are disordered; the sequence is MPPKGNKQAI…KEKTSAIATR (142 aa). Over residues 24–68 the composition is skewed to acidic residues; the sequence is QWDEEEESWDDSQAEEVSDEEEMESWESLDEELEDKPPKDEEEEI. The segment covering 69-78 has biased composition (low complexity); sequence IASAAAPSSK. Basic and acidic residues predominate over residues 123 to 136; the sequence is KRSEKTTRPRKEKT. Positions 160-187 are necessary for nuclear subcellular location; it reads YAIFQQSRGQQLELKVKNRSLRSLTRSC. Residues 166 to 186 form an RS-repeat; required for splicing enhancer activity region; sequence SRGQQLELKVKNRSLRSLTRS.

The protein belongs to the adenoviridae splicing factor family. Homooligomer. Interacts with DBP; this interaction occurs at a unique vertex during genome packaging. Interacts with IVa2; this interaction occurs at a unique vertex during genome packaging and seems to potentiate IVa2 and 33K oligomerization. In terms of processing, phosphorylated in vitro by human PKA and PRKDC. PRKDC inhibits, whereas PKA activates the splicing factor.

Its subcellular location is the host nucleus. In terms of biological role, promotes alternative splicing of late transcripts by promoting splicing at weak 3' splice sites. Required for the temporal activation of major late pre-mRNA splicing at late times of infection. Induces the splicing and expression of the late capsid vertex protein. Its function is as follows. Probably functions as the small terminase that is part of the molecular motor that translocates genomic DNA in empty capsid during DNA packaging. This motor is located at a unique vertex and comprises at least the IVa2 ATPase, the small terminase 33K and probably a portal. Forms a ring-like structure of about 17 nm in which genomic DNA is translocated into the capsid. Stimulates IVa2 ATPase activity in the presence of the viral genome. Once the DNA is packaged, the terminase detaches: the 33K protein is present in the empty particles, but not in the mature virions. Also involved in virion assembly. The chain is Protein 33K from Human adenovirus F serotype 41 (HAdV-41).